Consider the following 242-residue polypeptide: Endoplasmic reticulum membrane protein complex subunit 7 (242 aa).

The first 23 residues, 1 to 23 (MAAALWGFFPVLLLLLLSGDVQS), serve as a signal peptide directing secretion. At 24–159 (SEVPGAAAEG…IKRESWGWTD (136 aa)) the chain is on the lumenal side. A helical membrane pass occupies residues 160 to 180 (FLMNPMVMMMVLPLLIFVLLP). The Cytoplasmic segment spans residues 181-242 (KVVNTSDPDM…TGKSGAGKRR (62 aa)). The interval 217–242 (LFSSKSSGKSSSGSSKTGKSGAGKRR) is disordered. Residues 219–235 (SSKSSGKSSSGSSKTGK) show a composition bias toward low complexity.

This sequence belongs to the EMC7 family. In terms of assembly, component of the ER membrane protein complex (EMC).

The protein resides in the endoplasmic reticulum membrane. Its function is as follows. Part of the endoplasmic reticulum membrane protein complex (EMC) that enables the energy-independent insertion into endoplasmic reticulum membranes of newly synthesized membrane proteins. Preferentially accommodates proteins with transmembrane domains that are weakly hydrophobic or contain destabilizing features such as charged and aromatic residues. Involved in the cotranslational insertion of multi-pass membrane proteins in which stop-transfer membrane-anchor sequences become ER membrane spanning helices. It is also required for the post-translational insertion of tail-anchored/TA proteins in endoplasmic reticulum membranes. By mediating the proper cotranslational insertion of N-terminal transmembrane domains in an N-exo topology, with translocated N-terminus in the lumen of the ER, controls the topology of multi-pass membrane proteins like the G protein-coupled receptors. By regulating the insertion of various proteins in membranes, it is indirectly involved in many cellular processes. This is Endoplasmic reticulum membrane protein complex subunit 7 (EMC7) from Homo sapiens (Human).